We begin with the raw amino-acid sequence, 381 residues long: ATP-dependent (S)-NAD(P)H-hydrate dehydratase (381 aa).

A YjeF C-terminal domain is found at 84 to 376 (AEAVVRRITP…EFLGKSLEDI (293 aa)). (6S)-NADPHX is bound by residues G197 and 250 to 256 (NVYEYKR). ATP contacts are provided by residues 290–294 (KGKAD) and 309–318 (GSPRRCGGQG). D319 contributes to the (6S)-NADPHX binding site.

It belongs to the NnrD/CARKD family. Mg(2+) serves as cofactor.

It carries out the reaction (6S)-NADHX + ATP = ADP + phosphate + NADH + H(+). It catalyses the reaction (6S)-NADPHX + ATP = ADP + phosphate + NADPH + H(+). Functionally, catalyzes the dehydration of the S-form of NAD(P)HX at the expense of ATP, which is converted to ADP. Together with NAD(P)HX epimerase, which catalyzes the epimerization of the S- and R-forms, the enzyme allows the repair of both epimers of NAD(P)HX, a damaged form of NAD(P)H that is a result of enzymatic or heat-dependent hydration. This chain is ATP-dependent (S)-NAD(P)H-hydrate dehydratase, found in Sorghum bicolor (Sorghum).